A 287-amino-acid chain; its full sequence is MRGTIMKGIGGFYYVNTDRGIIECRARGKFRYNGLFPMVGDKVEIKLERDQGIIDEICPRISQLKRPAVANVTQALVVFAFNHPEINEDLLNKFLISCEFNNLKPIVCFNKLDLADKEKKLDVIDMIRNTGYEVIFLKAKEGYGIDKVREKLKDNITVLCGPSGVGKSTILNAIYGKELMETGQISHKLNRGKHTTRHSEIIELEDGFMVDTPGFSSLDIGHITKDKLQYCFPEFIEFIGICKFTGCVHHKEPDCAVKSALYDDKINKRRYDFYVKTLNEISSKKKY.

The 158-residue stretch at 61 to 218 (ISQLKRPAVA…MVDTPGFSSL (158 aa)) folds into the CP-type G domain. GTP-binding positions include 110–113 (NKLD) and 161–169 (GPSGVGKST). 4 residues coordinate Zn(2+): Cys-242, Cys-247, His-249, and Cys-255.

It belongs to the TRAFAC class YlqF/YawG GTPase family. RsgA subfamily. As to quaternary structure, monomer. Associates with 30S ribosomal subunit, binds 16S rRNA. Zn(2+) is required as a cofactor.

The protein resides in the cytoplasm. Functionally, one of several proteins that assist in the late maturation steps of the functional core of the 30S ribosomal subunit. Helps release RbfA from mature subunits. May play a role in the assembly of ribosomal proteins into the subunit. Circularly permuted GTPase that catalyzes slow GTP hydrolysis, GTPase activity is stimulated by the 30S ribosomal subunit. This Clostridium kluyveri (strain NBRC 12016) protein is Small ribosomal subunit biogenesis GTPase RsgA.